We begin with the raw amino-acid sequence, 818 residues long: MLHSPPPFADGLRPLKVIIIGGGIAGLSLANAFEKAPVPIEYVILEARDTIAPQVGAGIALAPSGCRILDQLGVYDDLEQLVHPVQSSGVCDGQGKSLLPERSDTALLVTARMSYPLGWVERRSVLQVLFKHICHKKSVLTSKRMDRIEHSREQEKPIKVICTDGSFYEGDLVVGADGVHSKTRSEMWRVVEQNICDDFDVQQERRAMMAEYQCMFGISSPIPGLDAGMTDDTLARDVSMVVASGKDGKIFWFLFKRMPQVYHSHEIPRFDSADALKFAEQYFDFPVQSGASNIKFSDLWERRETATLVPLEEADFAHWTAGRIVCLGDSAHKMTPHTGTGGMLALEHAAVLANIICRLVAQGNKLPLTTSQIGTALSQYDEKRRHRRTSAKIKSTGASARMQTLQSLADRLVVRFLLPYAGDIRADQFCDDAIGAEHIEYMPVPARSMTGLMPFNPNRGIGMHESIWPRVLWALPLLGMAVAGLLTMFSVAPFEDAYDFLARRRYREVEIRDKFYHSGLLDDFSRSGVLRFIVSEAHFFYQPFSFFADYGVWYGIMLVESARRANRLNVLSFALLWGMLNMWGIAIFVPIYYFAYYILTPISTFDASDRRLTNLSYTKTILPVLLATHYATFMDAYLSPVRSHRQAAGFLWELFPVWLSLAQAGLARKFLQPSTLKQDRLNNVTRDLPTIRTTILGLCAVSTAVWQYTVWCSEDSLVNIFIPILSSAQGQTFEQLFAEFLKWDQVFFAIPNLFWIILLFADLRAAGLIHAGWLKISFSALGLIIAGGNGTMLGLMWLYREEVLATRRDRGAVVRPIA.

Positions 46, 60, 122, 329, and 342 each coordinate FAD. 3 consecutive transmembrane segments (helical) span residues 471-491 (VLWA…MFSV), 539-559 (FFYQ…IMLV), and 571-591 (LSFA…FVPI). The N-linked (GlcNAc...) asparagine glycan is linked to asparagine 614. 2 consecutive transmembrane segments (helical) span residues 621–641 (ILPV…LSPV) and 647–667 (AAGF…AGLA). N-linked (GlcNAc...) asparagine glycosylation occurs at asparagine 683. The next 2 membrane-spanning stretches (helical) occupy residues 743–763 (WDQV…FADL) and 778–798 (FSAL…LMWL).

This sequence belongs to the paxM FAD-dependent monooxygenase family.

The protein resides in the membrane. In terms of biological role, highly reducing polyketide synthase; part of the gene cluster that mediates the biosynthesis of annullatin D, an alkylated aromatic polyketide with a fused dihydrobenzofuran lactone ring system that exhibits potent agonistic activities toward the cannabinoid receptors. AnuJ does not seem to play a role within the pathway. The annullatin backbone 2-hydroxymethyl-3-pentylphenol is assembled from one acetyl-CoA starter unit and 5 malonyl-CoA elongation units by cooperation of the highly reducing polyketide synthase anuA, the short-chain dehydrogenase anuB and the oxidoreductase anuC, before being hydroxylated at the C-5 alkyl chain by the cytochrome P450 monooxygenase anuE to form (8S)-annullatin E. The prenyltransferase anuH subsequently installs one isoprenyl group at the benzene ring to form (8S)-annullatin J. Enzymatic or nonenzymatic dihydro-benzofuran ring formation between the prenyl and the phenolic hydroxyl groups in (8S)-annullatin J results in two diastereomers (2S,9S)-annullatin H and compound 12. The intermediate (2S,9S)-annullatin H is then converted to (2S,9S)-annullatin D by the FAD-linked oxidoreductase anuG-catalyzed five-member lactone ring formation. The isomer 12 acts as a substrate for the short-chain dehydrogenase anuF and is oxidized to (2R)-annullatin F, which is subsequently acetylated by an acetyltransferase leading to (2R)-annullatin G formation. The remaining enzymes identified within the cluster, anuD, anuI and anuJ, seem not to be involved in annullatin biosynthesis. This chain is FAD-dependent monooxygenase anuJ, found in Penicillium roqueforti (strain FM164).